A 440-amino-acid chain; its full sequence is MHFLDDNIQIKIDKFYKKNSLNKNRVIVAFSGGADSTTLLLNLKYYLSNNIIAFYFAHFIRPDNEQNKEIEHVKGFCDLYNIALQIKKCDIDIKSESVRLGVSIEELARKCRYNALENALKENDANYIALAHNENDQIETIIMRFFQGSFLDGLAGIPSVNKNIIRPLLEVSRPEIENFLSLNNIRVFIDSTNSQNLYLRNKVRNNLLPSIEKIFKGYEKCLKRISEFSKEFVNYFEKDEFFPVEKGKYYYSFDLKAFLDFPKYLVFRLIFKILNSEGIVAKISYKALNELFKIEIDRKKNNVLLKTNDFFLEKRHNKINLIFKRDEKFYKPFDFILEVGKWHSLSLGKILLKCLECNAASVSRLKCCSYEFRYKFFKDKLKAKKFFSKFIRCNPIYLMLLALDNRLIGIIDLNTLNLVWSEKSILKKISISLIGGLLKE.

Residue 31-36 (SGGADS) coordinates ATP.

Belongs to the tRNA(Ile)-lysidine synthase family.

The protein resides in the cytoplasm. It catalyses the reaction cytidine(34) in tRNA(Ile2) + L-lysine + ATP = lysidine(34) in tRNA(Ile2) + AMP + diphosphate + H(+). Its function is as follows. Ligates lysine onto the cytidine present at position 34 of the AUA codon-specific tRNA(Ile) that contains the anticodon CAU, in an ATP-dependent manner. Cytidine is converted to lysidine, thus changing the amino acid specificity of the tRNA from methionine to isoleucine. The protein is tRNA(Ile)-lysidine synthase of Borreliella afzelii (strain PKo) (Borrelia afzelii).